Consider the following 714-residue polypeptide: Forkhead box protein P2 (714 aa).

The segment covering 1 to 28 (MMQESATETISNSSMNQNGMSTLSSQLD) has biased composition (polar residues). 2 disordered regions span residues 1 to 45 (MMQE…SEVS) and 280 to 338 (DNGI…TGAS). The span at 291-304 (TTNNSSSTTSSTTS) shows a compositional bias: low complexity. Positions 314-323 (SIVNGQSSVL) are enriched in polar residues. Over residues 325 to 336 (ARRDSSSHEETG) the composition is skewed to basic and acidic residues. A C2H2-type zinc finger spans residues 345–370 (GVCKWPGCESICEDFGQFLKHLNNEH). Residues 387-408 (VQQLEIQLSKERERLQAMMTHL) are leucine-zipper. The interval 421 to 425 (PLNLV) is CTBP1-binding. A compositionally biased stretch (low complexity) spans 437-458 (TSPQSLPQTPTTPTAPVTPITQ). Residues 437–464 (TSPQSLPQTPTTPTAPVTPITQGPSVIT) form a disordered region. Residues 503-593 (RPPFTYATLI…SQKITGSPTL (91 aa)) constitute a DNA-binding region (fork-head). Disordered regions lie at residues 648-667 (LDHI…QPHI) and 677-714 (VIAE…EDLE). The segment covering 698-714 (LEDDREIEEEPLSEDLE) has biased composition (acidic residues).

As to quaternary structure, forms homodimers and heterodimers with FOXP1 and FOXP4. Dimerization is required for DNA-binding. Interacts with CTBP1. Interacts with FOXP1. Interacts with TBR1. Interacts with ZMYM2. Highest expression in lung. Lower expression in spleen, skeletal muscle, brain, kidney and small intestine.

It is found in the nucleus. In terms of biological role, transcriptional repressor that may play a role in the specification and differentiation of lung epithelium. May also play a role in developing neural, gastrointestinal and cardiovascular tissues. Can act with CTBP1 to synergistically repress transcription but CTPBP1 is not essential. Plays a role in synapse formation by regulating SRPX2 levels. This chain is Forkhead box protein P2 (Foxp2), found in Mus musculus (Mouse).